A 322-amino-acid polypeptide reads, in one-letter code: Pantothenate kinase (322 aa).

100-107 (GSVAVGKS) is an ATP binding site.

The protein belongs to the prokaryotic pantothenate kinase family.

The protein resides in the cytoplasm. The enzyme catalyses (R)-pantothenate + ATP = (R)-4'-phosphopantothenate + ADP + H(+). It participates in cofactor biosynthesis; coenzyme A biosynthesis; CoA from (R)-pantothenate: step 1/5. This Brucella abortus (strain 2308) protein is Pantothenate kinase.